Reading from the N-terminus, the 440-residue chain is Adenosylhomocysteinase (440 aa).

Substrate contacts are provided by Thr64, Asp139, and Glu164. Position 165 to 167 (Thr165 to Thr167) interacts with NAD(+). The substrate site is built by Lys194 and Asp198. NAD(+) is bound by residues Asn199, Gly228–Gly233, Glu251, Asn286, Ile307–His309, and Asn352.

This sequence belongs to the adenosylhomocysteinase family. It depends on NAD(+) as a cofactor.

It is found in the cytoplasm. It catalyses the reaction S-adenosyl-L-homocysteine + H2O = L-homocysteine + adenosine. Its pathway is amino-acid biosynthesis; L-homocysteine biosynthesis; L-homocysteine from S-adenosyl-L-homocysteine: step 1/1. May play a key role in the regulation of the intracellular concentration of adenosylhomocysteine. The polypeptide is Adenosylhomocysteinase (Granulibacter bethesdensis (strain ATCC BAA-1260 / CGDNIH1)).